A 139-amino-acid chain; its full sequence is Tetra-peptide repeat homeobox-like protein (139 aa).

Disordered regions lie at residues 1–22 (MQDP…RQRQ) and 78–139 (ERWF…QQPQ). Positions 20-79 (QRQDRTIYNWKQQEVLENHFKEEQYPDYDTRQELAEMLNLREYQVQVWFKNRRAKRSRER) form a DNA-binding region, homeobox. A compositionally biased stretch (low complexity) spans 82–139 (QKQLQQLQKHPQQQHPQQQHPQQQLQQQQPQQQPQQQQPQQQPQQQQPQQQQLHQQPQ).

It belongs to the paired homeobox family.

Its subcellular location is the nucleus. Functionally, transcription factor required for zygotic genome activation (ZGA), a critical event in early embryonic development during which the developmental control passes from maternally provided mRNAs to the expression of the zygotic genome after fertilization. Protein produced from maternal transcripts that binds and activates expression of key ZGA marker genes, such as NANOGNB, ZSCAN4, DUXB, KLF5 and DPPA3. Binds to regulatory DNA sequences containing a 5'-TAATCC-3' sequence motif. This chain is Tetra-peptide repeat homeobox-like protein, found in Homo sapiens (Human).